A 130-amino-acid chain; its full sequence is Large ribosomal subunit protein bL12 (130 aa).

Belongs to the bacterial ribosomal protein bL12 family. In terms of assembly, homodimer. Part of the ribosomal stalk of the 50S ribosomal subunit. Forms a multimeric L10(L12)X complex, where L10 forms an elongated spine to which 2 to 4 L12 dimers bind in a sequential fashion. Binds GTP-bound translation factors.

Its function is as follows. Forms part of the ribosomal stalk which helps the ribosome interact with GTP-bound translation factors. Is thus essential for accurate translation. In Parafrankia sp. (strain EAN1pec), this protein is Large ribosomal subunit protein bL12.